The chain runs to 334 residues: Heat-inducible transcription repressor HrcA (334 aa).

Belongs to the HrcA family.

In terms of biological role, negative regulator of class I heat shock genes (grpE-dnaK-dnaJ and groELS operons). Prevents heat-shock induction of these operons. This is Heat-inducible transcription repressor HrcA from Acidovorax ebreus (strain TPSY) (Diaphorobacter sp. (strain TPSY)).